Consider the following 178-residue polypeptide: Ribosome maturation factor RimP (178 aa).

This sequence belongs to the RimP family.

Its subcellular location is the cytoplasm. Required for maturation of 30S ribosomal subunits. The sequence is that of Ribosome maturation factor RimP from Streptococcus pyogenes serotype M4 (strain MGAS10750).